We begin with the raw amino-acid sequence, 170 residues long: Alpha-crystallin A chain (170 aa).

At Met1 the chain carries N-acetylmethionine. Residues Met1–Glu63 form a required for complex formation with BFSP1 and BFSP2 region. The residue at position 6 (Gln6) is a Deamidated glutamine; partial. The residue at position 45 (Ser45) is a Phosphoserine. Gln50 carries the post-translational modification Deamidated glutamine; partial. A sHSP domain is found at Leu52–Glu161. Lys99 carries the post-translational modification N6-acetyllysine. His100 lines the Zn(2+) pocket. Asn101 bears the Deamidated asparagine; partial mark. Zn(2+)-binding residues include Glu102, His107, and His151. Positions Pro144–Ser170 are disordered. Basic and acidic residues predominate over residues Asp148–Pro164. A glycan (O-linked (GlcNAc) serine) is linked at Ser159.

It belongs to the small heat shock protein (HSP20) family. In terms of assembly, heteromer composed of three CRYAA and one CRYAB subunits. Inter-subunit bridging via zinc ions enhances stability, which is crucial as there is no protein turn over in the lens. Can also form homodimers and homotetramers (dimers of dimers) which serve as the building blocks of homooligomers. Within homooligomers, the zinc-binding motif is created from residues of 3 different molecules. His-100 and Glu-102 from one molecule are ligands of the zinc ion, and His-107 and His-151 residues from additional molecules complete the site with tetrahedral coordination geometry. Part of a complex required for lens intermediate filament formation composed of BFSP1, BFSP2 and CRYAA. In terms of processing, acetylation at Lys-99 may increase chaperone activity. Post-translationally, undergoes age-dependent proteolytical cleavage at the C-terminus.

The protein localises to the cytoplasm. It is found in the nucleus. Contributes to the transparency and refractive index of the lens. Acts as a chaperone, preventing aggregation of various proteins under a wide range of stress conditions. Required for the correct formation of lens intermediate filaments as part of a complex composed of BFSP1, BFSP2 and CRYAA. This Tamandua mexicana (Northern Tamandua) protein is Alpha-crystallin A chain (CRYAA).